The sequence spans 202 residues: ATP-dependent Clp protease proteolytic subunit (202 aa).

Ser106 acts as the Nucleophile in catalysis. His131 is an active-site residue.

It belongs to the peptidase S14 family. Fourteen ClpP subunits assemble into 2 heptameric rings which stack back to back to give a disk-like structure with a central cavity, resembling the structure of eukaryotic proteasomes.

The protein resides in the cytoplasm. The catalysed reaction is Hydrolysis of proteins to small peptides in the presence of ATP and magnesium. alpha-casein is the usual test substrate. In the absence of ATP, only oligopeptides shorter than five residues are hydrolyzed (such as succinyl-Leu-Tyr-|-NHMec, and Leu-Tyr-Leu-|-Tyr-Trp, in which cleavage of the -Tyr-|-Leu- and -Tyr-|-Trp bonds also occurs).. Its function is as follows. Cleaves peptides in various proteins in a process that requires ATP hydrolysis. Has a chymotrypsin-like activity. Plays a major role in the degradation of misfolded proteins. This Variovorax paradoxus (strain S110) protein is ATP-dependent Clp protease proteolytic subunit.